A 942-amino-acid chain; its full sequence is SWI/SNF-related matrix-associated actin-dependent regulator of chromatin subfamily A-like protein 1 (942 aa).

A coiled-coil region spans residues 5–29; it reads LTEEQKRKIEENRQRALARRAERLA. Residues 24–214 are disordered; the sequence is RAERLAAQQN…KTVSEGRERG (191 aa). 2 stretches are compositionally biased toward polar residues: residues 34-71 and 79-88; these read SQTN…SRAA and KSPSGGNTAP. A compositionally biased stretch (basic and acidic residues) spans 104–119; it reads RSHDSKSLTDPAKDVK. Composition is skewed to polar residues over residues 129–138, 149–162, and 171–187; these read SVPSGPSNAP, TPGQ…NSYS, and DNDT…TTIT. HARP domains lie at 228-299 and 331-402; these read ASGA…KALE and PSAT…EPLP. The Helicase ATP-binding domain occupies 448-603; it reads NFAVSREGRL…YTQIAAVRPS (156 aa). Residue 461 to 468 coordinates ATP; the sequence is DDMGLGKT. The DESH box signature appears at 552–555; the sequence is DESH. Positions 647-664 match the Nuclear localization signal motif; it reads RRLKSEVLSQLPAKQRKM. The Helicase C-terminal domain maps to 719-872; sequence YIMDLLESGR…EANFSETTES (154 aa).

Belongs to the SNF2/RAD54 helicase family. SMARCAL1 subfamily.

The protein localises to the nucleus. The catalysed reaction is ATP + H2O = ADP + phosphate + H(+). ATP-dependent annealing helicase that catalyzes the rewinding of the stably unwound DNA. Rewinds single-stranded DNA bubbles that are stably bound by replication protein A (RPA). Acts throughout the genome to reanneal stably unwound DNA, performing the opposite reaction of many enzymes, such as helicases and polymerases, that unwind DNA. The polypeptide is SWI/SNF-related matrix-associated actin-dependent regulator of chromatin subfamily A-like protein 1 (smarcal1) (Xenopus tropicalis (Western clawed frog)).